The following is a 255-amino-acid chain: 4-hydroxy-tetrahydrodipicolinate reductase (255 aa).

NAD(+) contacts are provided by residues 9 to 14 (GYRGKM), 89 to 91 (GTT), and 115 to 118 (APNF). The active-site Proton donor/acceptor is the His-145. Residue His-146 participates in (S)-2,3,4,5-tetrahydrodipicolinate binding. The Proton donor role is filled by Lys-149. 155 to 156 (GT) contacts (S)-2,3,4,5-tetrahydrodipicolinate.

Belongs to the DapB family.

It is found in the cytoplasm. It catalyses the reaction (S)-2,3,4,5-tetrahydrodipicolinate + NAD(+) + H2O = (2S,4S)-4-hydroxy-2,3,4,5-tetrahydrodipicolinate + NADH + H(+). The enzyme catalyses (S)-2,3,4,5-tetrahydrodipicolinate + NADP(+) + H2O = (2S,4S)-4-hydroxy-2,3,4,5-tetrahydrodipicolinate + NADPH + H(+). It functions in the pathway amino-acid biosynthesis; L-lysine biosynthesis via DAP pathway; (S)-tetrahydrodipicolinate from L-aspartate: step 4/4. Catalyzes the conversion of 4-hydroxy-tetrahydrodipicolinate (HTPA) to tetrahydrodipicolinate. This Streptococcus uberis (strain ATCC BAA-854 / 0140J) protein is 4-hydroxy-tetrahydrodipicolinate reductase.